Reading from the N-terminus, the 487-residue chain is Sensor protein CseC (487 aa).

Low complexity predominate over residues 1-11; that stretch reads MRGNLRRPGPA. Residues 1–41 are disordered; sequence MRGNLRRPGPAGTAGPGRTGIRTSADGGRARPRTGAGTGVR. 2 helical membrane passes run 63 to 83 and 185 to 205; these read ISAA…LVVH and ALII…VLIG. One can recognise an HAMP domain in the interval 206–262; that stretch reads GQLSRRLRKAAAAANQVAQGERDVRVRDAIGGVVRDETDDLARAVDAMADALQQRIE. The Histidine kinase domain maps to 270-472; it reads DIAHELRTPV…VAVLWLPEHA (203 aa). The residue at position 273 (H273) is a Phosphohistidine; by autocatalysis.

The protein resides in the cell membrane. The catalysed reaction is ATP + protein L-histidine = ADP + protein N-phospho-L-histidine.. The polypeptide is Sensor protein CseC (cseC) (Streptomyces avermitilis (strain ATCC 31267 / DSM 46492 / JCM 5070 / NBRC 14893 / NCIMB 12804 / NRRL 8165 / MA-4680)).